Consider the following 419-residue polypeptide: eIF5-mimic protein 2-A (419 aa).

Positions 1–15 (MNNQKQQKPTLTGQR) are enriched in polar residues. The disordered stretch occupies residues 1–29 (MNNQKQQKPTLTGQRFKTRKRDEKERFDP). Positions 247–414 (NQQSIGARKE…KNAEEESESE (168 aa)) constitute a W2 domain.

The protein belongs to the BZW family.

Functionally, translation initiation regulator which may repress repeat-associated non-AUG (RAN) initiated translation probably by acting as a competitive inhibitor of eukaryotic translation initiation factor 5 (EIF5) function. Enhances histone H4 gene transcription but does not seem to bind DNA directly. The polypeptide is eIF5-mimic protein 2-A (bzw1a) (Danio rerio (Zebrafish)).